We begin with the raw amino-acid sequence, 940 residues long: Pentatricopeptide repeat-containing protein At5g14770, mitochondrial (940 aa).

The N-terminal 24 residues, 1-24, are a transit peptide targeting the mitochondrion; the sequence is MIMIRIWNNYKGKYRFFLSNCRSF. PPR repeat units follow at residues 59–93, 94–129, 130–161, 162–196, 197–231, 241–259, 260–294, 295–329, 330–364, 365–399, 400–434, 435–469, 470–504, 505–539, 540–573, 574–608, 609–643, 644–678, 679–713, 714–748, 749–783, 784–818, 819–853, and 854–891; these read YVSL…GVVP, DSRL…GVSP, DVFA…VISI, DTVT…GILP, DTVS…NLIT, NLHA…GFDP, DVVT…SVYP, NHVT…GIPV, DLVV…NQVP, NVVT…SVIP, NVVT…NVVP, NGFT…GVEE, NNYI…GVTL, DQIN…GMPW, DVVS…GIEP, DIAT…GIKP, SLMS…EIHP, NLTT…GIKL, SRQV…GFIP, DTVT…GISP, NVAT…GMRP, DDFT…GLVP, KTST…GVSP, and NTST…GLLK.

The protein belongs to the PPR family. P subfamily.

Its subcellular location is the mitochondrion. The protein is Pentatricopeptide repeat-containing protein At5g14770, mitochondrial of Arabidopsis thaliana (Mouse-ear cress).